The sequence spans 600 residues: Aspartate--tRNA(Asp/Asn) ligase (600 aa).

E183 serves as a coordination point for L-aspartate. The aspartate stretch occupies residues 207 to 210 (QLFK). R229 lines the L-aspartate pocket. ATP is bound by residues 229 to 231 (RDE) and Q238. An L-aspartate-binding site is contributed by H456. An ATP-binding site is contributed by E490. R497 provides a ligand contact to L-aspartate. An ATP-binding site is contributed by 542–545 (GLDR).

This sequence belongs to the class-II aminoacyl-tRNA synthetase family. Type 1 subfamily. As to quaternary structure, homodimer.

The protein resides in the cytoplasm. It carries out the reaction tRNA(Asx) + L-aspartate + ATP = L-aspartyl-tRNA(Asx) + AMP + diphosphate. Its function is as follows. Aspartyl-tRNA synthetase with relaxed tRNA specificity since it is able to aspartylate not only its cognate tRNA(Asp) but also tRNA(Asn). Reaction proceeds in two steps: L-aspartate is first activated by ATP to form Asp-AMP and then transferred to the acceptor end of tRNA(Asp/Asn). The sequence is that of Aspartate--tRNA(Asp/Asn) ligase from Moorella thermoacetica (strain ATCC 39073 / JCM 9320).